The sequence spans 126 residues: Large ribosomal subunit protein bL20 (126 aa).

Positions 1-15 (MARVKRAVNAQKKRR) are enriched in basic residues. Positions 1–20 (MARVKRAVNAQKKRRTTLER) are disordered.

This sequence belongs to the bacterial ribosomal protein bL20 family.

In terms of biological role, binds directly to 23S ribosomal RNA and is necessary for the in vitro assembly process of the 50S ribosomal subunit. It is not involved in the protein synthesizing functions of that subunit. This Beutenbergia cavernae (strain ATCC BAA-8 / DSM 12333 / CCUG 43141 / JCM 11478 / NBRC 16432 / NCIMB 13614 / HKI 0122) protein is Large ribosomal subunit protein bL20.